Consider the following 145-residue polypeptide: D-aminoacyl-tRNA deacylase (145 aa).

The Gly-cisPro motif, important for rejection of L-amino acids signature appears at 137 to 138; sequence GP.

It belongs to the DTD family. Homodimer.

The protein localises to the cytoplasm. It carries out the reaction glycyl-tRNA(Ala) + H2O = tRNA(Ala) + glycine + H(+). The enzyme catalyses a D-aminoacyl-tRNA + H2O = a tRNA + a D-alpha-amino acid + H(+). An aminoacyl-tRNA editing enzyme that deacylates mischarged D-aminoacyl-tRNAs. Also deacylates mischarged glycyl-tRNA(Ala), protecting cells against glycine mischarging by AlaRS. Acts via tRNA-based rather than protein-based catalysis; rejects L-amino acids rather than detecting D-amino acids in the active site. By recycling D-aminoacyl-tRNA to D-amino acids and free tRNA molecules, this enzyme counteracts the toxicity associated with the formation of D-aminoacyl-tRNA entities in vivo and helps enforce protein L-homochirality. This chain is D-aminoacyl-tRNA deacylase, found in Brevibacillus brevis (strain 47 / JCM 6285 / NBRC 100599).